The primary structure comprises 276 residues: NADPH-dependent 7-cyano-7-deazaguanine reductase (276 aa).

Position 80-82 (80-82) interacts with substrate; sequence IES. Position 82–83 (82–83) interacts with NADPH; sequence SK. The Thioimide intermediate role is filled by Cys-178. Asp-185 functions as the Proton donor in the catalytic mechanism. 217 to 218 contacts substrate; sequence HE. Residue 246–247 coordinates NADPH; the sequence is RG.

Belongs to the GTP cyclohydrolase I family. QueF type 2 subfamily. As to quaternary structure, homodimer.

It localises to the cytoplasm. The enzyme catalyses 7-aminomethyl-7-carbaguanine + 2 NADP(+) = 7-cyano-7-deazaguanine + 2 NADPH + 3 H(+). It functions in the pathway tRNA modification; tRNA-queuosine biosynthesis. In terms of biological role, catalyzes the NADPH-dependent reduction of 7-cyano-7-deazaguanine (preQ0) to 7-aminomethyl-7-deazaguanine (preQ1). This chain is NADPH-dependent 7-cyano-7-deazaguanine reductase, found in Teredinibacter turnerae (strain ATCC 39867 / T7901).